The sequence spans 586 residues: Axin-like protein pry-1 (586 aa).

The required for interaction with apr-1 stretch occupies residues 1–135; sequence METHLGWARS…FIEAFNKMSS (135 aa). The 122-residue stretch at 10–131 folds into the RGS domain; sequence SLEAVLSDRS…GSEEFIEAFN (122 aa). 3 disordered regions span residues 137 to 168, 344 to 442, and 478 to 501; these read TADQ…KSAA, MTDD…DSFA, and TSSL…HSKI. 2 stretches are compositionally biased toward polar residues: residues 151–168 and 368–388; these read HQNT…KSAA and GEGS…QLHN. Residues 421 to 442 are compositionally biased toward low complexity; it reads SQSMCAPSYSSASSSYSRDSFA. Residues 486–501 are compositionally biased toward basic residues; sequence RRQHRKAPTPKKHSKI. Residues 505 to 586 form the DIX domain; the sequence is LSNLITISYL…FEGRIAAELR (82 aa).

In terms of assembly, interacts (via N-terminus) with apr-1 (via C-terminus). Interacts with bar-1 (via ARM repeats), gsk-3, and mig-5. Expressed in hypodermal cells (seam cells) V5 and V6, Q neuroblasts, ventral hypodermal cells P7/8 to P11/12, body wall muscle cells and neurons in the head, the tail and the ventral nerve cord.

Its subcellular location is the cell membrane. It is found in the nucleus. The protein localises to the cytoplasm. It localises to the cell cortex. Works in parallel with axl-1 in negatively regulating bar-1 signaling in vulval precursor cells and Q neuroblasts. Inhibits Wnt signaling, which affects tissue specific expression of Hox genes, egl-5, lin-39 and mab-5. This in turn affects QR (postembryonic neuroblast) cell migration, vulval cell fate specification, and the development of sensory structures by the seam cell lineage. Has a role in alae V cell patterning, ray formation in the male tail and axon guidance. Does not affect B cell polarity. This chain is Axin-like protein pry-1, found in Caenorhabditis elegans.